The sequence spans 155 residues: MSRRGTAKGKTAKYDPIYRNRLVNMLVNRILKHGKKALAYKILYGAVKKIQQNTKTNPLSILRQAIRGVTPDIAVKARRKSGSTRQVPIEIGSTQGKTLAIRWLLGASRKRPGQNMAFKLSSELVDAAKGRGGAIRKKEETIKMAEANRAFAHFR.

The protein belongs to the universal ribosomal protein uS7 family. In terms of assembly, part of the 30S ribosomal subunit.

The protein resides in the plastid. It localises to the chloroplast. In terms of biological role, one of the primary rRNA binding proteins, it binds directly to 16S rRNA where it nucleates assembly of the head domain of the 30S subunit. This Sagittaria latifolia (Broadleaf arrowhead) protein is Small ribosomal subunit protein uS7c (rps7).